The primary structure comprises 177 residues: Large ribosomal subunit protein uL6 (177 aa).

Belongs to the universal ribosomal protein uL6 family. As to quaternary structure, part of the 50S ribosomal subunit.

This protein binds to the 23S rRNA, and is important in its secondary structure. It is located near the subunit interface in the base of the L7/L12 stalk, and near the tRNA binding site of the peptidyltransferase center. The sequence is that of Large ribosomal subunit protein uL6 from Pseudomonas entomophila (strain L48).